The sequence spans 324 residues: Ig gamma-1 chain C region secreted form (324 aa).

A CH1 region spans residues 1–97 (AKTTPPSVYP…ASSTKVDKKI (97 aa)). A disulfide bridge connects residues cysteine 27 and cysteine 82. The tract at residues 98–110 (VPRDCGCKPCICT) is hinge. The tract at residues 111–217 (VPEVSSVFIF…PIEKTISKTK (107 aa)) is CH2. Disulfide bonds link cysteine 138–cysteine 198 and cysteine 244–cysteine 302. N-linked (GlcNAc...) asparagine glycosylation occurs at asparagine 174. The CH3 stretch occupies residues 218-324 (GRPKAPQVYT…EKSLSHSPGK (107 aa)).

Its subcellular location is the secreted. The sequence is that of Ig gamma-1 chain C region secreted form (Ighg1) from Mus musculus (Mouse).